Here is a 170-residue protein sequence, read N- to C-terminus: Helix-loop-helix protein 3 (170 aa).

Low complexity predominate over residues 1–26 (MTASTSSTPSTSTKIPSSSKSSVTKQ). 2 disordered regions span residues 1 to 42 (MTAS…VDQV) and 118 to 170 (TPSP…TETY). Residues 26 to 39 (QTKQKRNERERKRV) are basic motif; degenerate. One can recognise a bHLH domain in the interval 26-79 (QTKQKRNERERKRVDQVNQGFVLLQERVPKAAGNKAKLSKVETLREAARYIQEL). Positions 30 to 40 (KRNERERKRVD) are enriched in basic and acidic residues. Residues 40-79 (DQVNQGFVLLQERVPKAAGNKAKLSKVETLREAARYIQEL) are helix-loop-helix motif. Low complexity predominate over residues 143–157 (SHYYQESSSSSASTS).

In terms of assembly, efficient DNA binding requires dimerization with another bHLH protein. Forms a heterodimer with hlh-2. In terms of tissue distribution, expressed in the ADL sensory neurons.

Its subcellular location is the nucleus. Functionally, probable transcriptional regulator. May mediate transcriptional activation by binding to the E-box motif 5'-CANNTG-3'. Plays a role in the differentiation of the hermaphrodite-specific motor neurons (HSN) that are required for normal egg laying. Might play a role in serotonin production by regulating expression of the tryptophan hydrolase tph-1 which catalyzes serotonin synthesis, in the HSN neurons. Also plays a role in HSN axon guidance towards the vulva and the ventral nerve cord, possibly by promoting the expression of the netrin receptor unc-40. Under feeding conditions, involved in the regulation of the srh-234 chemoreceptor encoding gene expression in the ADL sensory neurons. Together with hlh-2, involved in the induction of programmed cell death in the sister cells of the serotonergic neurosecretory motor (NSM) neurons, probably through the activation of egl-1 transcription. The protein is Helix-loop-helix protein 3 of Caenorhabditis elegans.